We begin with the raw amino-acid sequence, 410 residues long: MLQKPRGTRDFLPDEMERRRLIERRMRDAARRWGYREVCTPDFEHLELFTMKSGEGIIQEMYVFEDKGGRKMTLRPEVTAAVLRMYVNEGKVLPKPLRWCYFADCFRYERPQKGRYRQFWQFGVELIGADTASADAEVIMLADDTLRSTGVTFDLHVGHLAPMKHLLSGLDPGDQRAIMAYLDKHDQKGLEAVLFGKNLTHLAEPLAALGECRTVSEVFEVAGDVPERARIEETFTLLESQEIDYRPDFGIARGLDYYTGMVFEGFAKNLGAENQILGGGTYRLAHLFGGDDVASCGFAIGFDRVMVSIGDFELAHEPVVGVVCTPEGRARALEVARAFREAGVRAEADLMQRGMGAQVSHAAKTADFAAVLGKREVEAGTVTLKNLHSGEQQERSLEEAIAEVARHGAC.

This sequence belongs to the class-II aminoacyl-tRNA synthetase family.

The protein resides in the cytoplasm. The catalysed reaction is tRNA(His) + L-histidine + ATP = L-histidyl-tRNA(His) + AMP + diphosphate + H(+). The polypeptide is Histidine--tRNA ligase (Methanoculleus marisnigri (strain ATCC 35101 / DSM 1498 / JR1)).